Consider the following 460-residue polypeptide: Centrosomal protein CEP57L1 (460 aa).

Serine 49 carries the phosphoserine modification. Coiled-coil stretches lie at residues 51-228 and 317-384; these read NSQA…EISK and ISIC…LKKH. A compositionally biased stretch (polar residues) spans 399 to 410; that stretch reads KMSEASGIQQED. Residues 399 to 423 are disordered; sequence KMSEASGIQQEDSYPKGSKNIKNSP.

The protein belongs to the translokin family.

It is found in the cytoplasm. The protein resides in the cytoskeleton. It localises to the microtubule organizing center. The protein localises to the centrosome. Centrosomal protein which may be required for microtubule attachment to centrosomes. The polypeptide is Centrosomal protein CEP57L1 (CEP57L1) (Homo sapiens (Human)).